The primary structure comprises 284 residues: Pantothenate synthetase (284 aa).

An ATP-binding site is contributed by 30-37 (MGYLHEGH). The active-site Proton donor is the histidine 37. Residue glutamine 61 coordinates (R)-pantoate. Glutamine 61 lines the beta-alanine pocket. 147-150 (GQKD) provides a ligand contact to ATP. Position 153 (glutamine 153) interacts with (R)-pantoate. ATP-binding positions include valine 176 and 184-187 (KSSR).

It belongs to the pantothenate synthetase family. In terms of assembly, homodimer.

It localises to the cytoplasm. The enzyme catalyses (R)-pantoate + beta-alanine + ATP = (R)-pantothenate + AMP + diphosphate + H(+). It participates in cofactor biosynthesis; (R)-pantothenate biosynthesis; (R)-pantothenate from (R)-pantoate and beta-alanine: step 1/1. In terms of biological role, catalyzes the condensation of pantoate with beta-alanine in an ATP-dependent reaction via a pantoyl-adenylate intermediate. The polypeptide is Pantothenate synthetase (Lysinibacillus sphaericus (strain C3-41)).